The following is a 241-amino-acid chain: tRNA pseudouridine synthase A (241 aa).

Aspartate 51 functions as the Nucleophile in the catalytic mechanism. Tyrosine 110 is a substrate binding site.

The protein belongs to the tRNA pseudouridine synthase TruA family. Homodimer.

The catalysed reaction is uridine(38/39/40) in tRNA = pseudouridine(38/39/40) in tRNA. Functionally, formation of pseudouridine at positions 38, 39 and 40 in the anticodon stem and loop of transfer RNAs. The chain is tRNA pseudouridine synthase A from Campylobacter jejuni subsp. jejuni serotype O:23/36 (strain 81-176).